The primary structure comprises 978 residues: Translation initiation factor IF-2 (978 aa).

Disordered stretches follow at residues 107–129 and 146–387; these read AEAPALETEQEVEAAPQVDNLEL and QEEE…HRVQ. Over residues 146–169 the composition is skewed to basic and acidic residues; the sequence is QEEELSERRRQREEQEARSREASE. Low complexity predominate over residues 170–186; that stretch reads KAAAVAAEAAEAAAAQA. Over residues 215-259 the composition is skewed to basic and acidic residues; that stretch reads AEKEQHLAKEKGLAREKELAESKARAAEDVVRAADLGDRRRKAES. Low complexity-rich tracts occupy residues 295–326 and 349–361; these read KPAAGAVPAKPAKPGAPGAPGAPAAGAAAGAG and PTRGATAAPGAGR. A compositionally biased stretch (basic and acidic residues) spans 375–386; the sequence is GSSDRDRDDHRV. The region spanning 478–647 is the tr-type G domain; sequence PRAPVVTVMG…LLQAEVLELK (170 aa). The segment at 487 to 494 is G1; sequence GHVDHGKT. 487 to 494 is a binding site for GTP; sequence GHVDHGKT. Residues 512–516 are G2; that stretch reads GITQH. A G3 region spans residues 533-536; it reads DTPG. GTP is bound by residues 533–537 and 587–590; these read DTPGH and NKID. Residues 587–590 are G4; it reads NKID. The segment at 623–625 is G5; that stretch reads SAK.

This sequence belongs to the TRAFAC class translation factor GTPase superfamily. Classic translation factor GTPase family. IF-2 subfamily.

It localises to the cytoplasm. Its function is as follows. One of the essential components for the initiation of protein synthesis. Protects formylmethionyl-tRNA from spontaneous hydrolysis and promotes its binding to the 30S ribosomal subunits. Also involved in the hydrolysis of GTP during the formation of the 70S ribosomal complex. This chain is Translation initiation factor IF-2, found in Albidiferax ferrireducens (strain ATCC BAA-621 / DSM 15236 / T118) (Rhodoferax ferrireducens).